Here is a 471-residue protein sequence, read N- to C-terminus: 3-isopropylmalate dehydratase large subunit (471 aa).

[4Fe-4S] cluster is bound by residues cysteine 351, cysteine 412, and cysteine 415.

The protein belongs to the aconitase/IPM isomerase family. LeuC type 1 subfamily. As to quaternary structure, heterodimer of LeuC and LeuD. Requires [4Fe-4S] cluster as cofactor.

It carries out the reaction (2R,3S)-3-isopropylmalate = (2S)-2-isopropylmalate. It functions in the pathway amino-acid biosynthesis; L-leucine biosynthesis; L-leucine from 3-methyl-2-oxobutanoate: step 2/4. Functionally, catalyzes the isomerization between 2-isopropylmalate and 3-isopropylmalate, via the formation of 2-isopropylmaleate. The polypeptide is 3-isopropylmalate dehydratase large subunit (Hahella chejuensis (strain KCTC 2396)).